A 456-amino-acid polypeptide reads, in one-letter code: UPF0496 protein 4 (456 aa).

The helical transmembrane segment at Val-195–Val-217 threads the bilayer. Residues Gln-368–Thr-390 form a disordered region. Residues Asn-371–Glu-381 are compositionally biased toward polar residues.

The protein belongs to the ROH1 family.

It localises to the membrane. The chain is UPF0496 protein 4 from Oryza sativa subsp. japonica (Rice).